The chain runs to 160 residues: S-ribosylhomocysteine lyase (160 aa).

Fe cation contacts are provided by H57, H61, and C127.

This sequence belongs to the LuxS family. As to quaternary structure, homodimer. Fe cation serves as cofactor.

It catalyses the reaction S-(5-deoxy-D-ribos-5-yl)-L-homocysteine = (S)-4,5-dihydroxypentane-2,3-dione + L-homocysteine. Functionally, involved in the synthesis of autoinducer 2 (AI-2) which is secreted by bacteria and is used to communicate both the cell density and the metabolic potential of the environment. The regulation of gene expression in response to changes in cell density is called quorum sensing. Catalyzes the transformation of S-ribosylhomocysteine (RHC) to homocysteine (HC) and 4,5-dihydroxy-2,3-pentadione (DPD). The chain is S-ribosylhomocysteine lyase from Streptococcus pyogenes serotype M4 (strain MGAS10750).